Consider the following 274-residue polypeptide: Type II restriction enzyme XamI (274 aa).

It carries out the reaction Endonucleolytic cleavage of DNA to give specific double-stranded fragments with terminal 5'-phosphates.. Functionally, a P subtype restriction enzyme that recognizes the double-stranded sequence 5'-GTCGAC-3' and cleaves after G-1. The sequence is that of Type II restriction enzyme XamI (xamIR) from Xanthomonas campestris pv. amaranthicola.